Consider the following 241-residue polypeptide: tRNA (guanine-N(7)-)-methyltransferase (241 aa).

Residues 1–10 (MTESNETPNT) are compositionally biased toward polar residues. Residues 1–21 (MTESNETPNTPEAGDESKHRR) form a disordered region. Residues glutamate 71, glutamate 96, aspartate 123, and aspartate 146 each contribute to the S-adenosyl-L-methionine site. The active site involves aspartate 146. Residues lysine 150, aspartate 182, and 219 to 222 (TKFE) each bind substrate.

Belongs to the class I-like SAM-binding methyltransferase superfamily. TrmB family.

The catalysed reaction is guanosine(46) in tRNA + S-adenosyl-L-methionine = N(7)-methylguanosine(46) in tRNA + S-adenosyl-L-homocysteine. It functions in the pathway tRNA modification; N(7)-methylguanine-tRNA biosynthesis. In terms of biological role, catalyzes the formation of N(7)-methylguanine at position 46 (m7G46) in tRNA. In Pseudomonas fluorescens (strain SBW25), this protein is tRNA (guanine-N(7)-)-methyltransferase.